Consider the following 171-residue polypeptide: Transcription elongation factor GreB (171 aa).

The stretch at 53 to 75 forms a coiled coil; the sequence is KKRLREIDRRVRFLAKRLEVLKI.

It belongs to the GreA/GreB family. GreB subfamily.

Functionally, necessary for efficient RNA polymerase transcription elongation past template-encoded arresting sites. The arresting sites in DNA have the property of trapping a certain fraction of elongating RNA polymerases that pass through, resulting in locked ternary complexes. Cleavage of the nascent transcript by cleavage factors such as GreA or GreB allows the resumption of elongation from the new 3'terminus. GreB releases sequences of up to 9 nucleotides in length. This chain is Transcription elongation factor GreB, found in Yersinia pestis.